Here is a 109-residue protein sequence, read N- to C-terminus: Small ribosomal subunit protein eS25 (109 aa).

The segment covering 1-13 has biased composition (basic and acidic residues); sequence MVKKIQESKEKKA. The tract at residues 1–34 is disordered; that stretch reads MVKKIQESKEKKALKAASGTRKDKKKWGDGRKKE.

This sequence belongs to the eukaryotic ribosomal protein eS25 family.

The sequence is that of Small ribosomal subunit protein eS25 (RPS25-1) from Encephalitozoon cuniculi (strain GB-M1) (Microsporidian parasite).